A 189-amino-acid polypeptide reads, in one-letter code: Probable nicotinate-nucleotide adenylyltransferase (189 aa).

Belongs to the NadD family.

The enzyme catalyses nicotinate beta-D-ribonucleotide + ATP + H(+) = deamido-NAD(+) + diphosphate. It participates in cofactor biosynthesis; NAD(+) biosynthesis; deamido-NAD(+) from nicotinate D-ribonucleotide: step 1/1. Catalyzes the reversible adenylation of nicotinate mononucleotide (NaMN) to nicotinic acid adenine dinucleotide (NaAD). This is Probable nicotinate-nucleotide adenylyltransferase from Bacillus anthracis (strain CDC 684 / NRRL 3495).